The primary structure comprises 119 residues: Large ribosomal subunit protein uL18 (119 aa).

Belongs to the universal ribosomal protein uL18 family. In terms of assembly, part of the 50S ribosomal subunit; part of the 5S rRNA/L5/L18/L25 subcomplex. Contacts the 5S and 23S rRNAs.

In terms of biological role, this is one of the proteins that bind and probably mediate the attachment of the 5S RNA into the large ribosomal subunit, where it forms part of the central protuberance. The protein is Large ribosomal subunit protein uL18 of Xanthomonas campestris pv. campestris (strain 8004).